The following is a 456-amino-acid chain: Exodeoxyribonuclease 7 large subunit (456 aa).

Belongs to the XseA family. Heterooligomer composed of large and small subunits.

The protein resides in the cytoplasm. The catalysed reaction is Exonucleolytic cleavage in either 5'- to 3'- or 3'- to 5'-direction to yield nucleoside 5'-phosphates.. Bidirectionally degrades single-stranded DNA into large acid-insoluble oligonucleotides, which are then degraded further into small acid-soluble oligonucleotides. The chain is Exodeoxyribonuclease 7 large subunit from Shigella boydii serotype 4 (strain Sb227).